The chain runs to 153 residues: Protein DpnD (153 aa).

This Streptococcus pneumoniae serotype 4 (strain ATCC BAA-334 / TIGR4) protein is Protein DpnD.